The sequence spans 144 residues: Putative RNase YutE (144 aa).

The active site involves Arg96. Positions 96-103 (RKTLVQQY) match the RX(4)HXY motif motif.

It belongs to the HepT RNase toxin family. As to quaternary structure, homodimer, probably forms a complex with cognate antitoxin YutD.

Its function is as follows. Probable toxic component of a putative type VII toxin-antitoxin (TA) system, probably an RNase. Probably neutralized by cognate antitoxin YutD. This Bacillus subtilis (strain 168) protein is Putative RNase YutE (yutE).